Reading from the N-terminus, the 734-residue chain is MALRFPRFSQGLAQDPTTRRIWFGIATAHDFESHDDITEERLYQNIFASHFGQLAIIFLWTSGNLFHVAWQGNFESWVQDPLHVRPIAHTIWDPHFGQPAVEAFTRGGALGPVNIAYSGVYQWWYTIGLRTNEDLYTGALFLLFISAISLVGGWLHLQPKWKPSVSWFKNAESRLNHHLSGLFGVSSLAWAGHLVHVAIPGSRGEYVRWNNFLDVLPYPQGLGPLFTGQWNLYAQNPDSSSHLFGTSQGAGTAILTLLGGFHPQTQSLWLTDIAHHHLAIAFIFLVAGHMYRTNFGIGHSIKDLLEAHIPPGGRLGRGHKGLYDTINNSIHFQLGLALASLGVITSLVAQHMYSLPAYAFIAQDFTTQAALYTHHQYIAGFIMTGAFAHGAIFFIRDYNPQQNEDNVLARMLDHKEAIISHLSWASLFLGFHTLGLYVHNDVMLAFGTPEKQILIEPIFAQWIQSAHGKTSYGFDVLLSSTNGPAFNAGQSLWLPGWLNAINENRNSLFLTIGPGDFLVHHAIALGLHTTTLILVKGALDARGSKLMPDKKDFGYSFPCDGPGRGGTCDISAWDAFYLAVFWMLNTIGWVTFYWHWKHITLWQGNVSQFNESSTYLMGWLRDYLWLNSSQLINGYNPFGMNSLSVWAWMFLFGHLVWATGFMFLISWRGYWQELIETLAWAHERTPLANLIRWRDKPVALSIVQARLVGLAHFSVGYIFTYAAFLIASTSGKFG.

8 helical membrane passes run 46–69 (IFAS…FHVA), 135–158 (LYTG…LHLQ), 175–199 (LNHH…HVAI), 273–291 (IAHH…GHMY), 330–353 (IHFQ…QHMY), 369–395 (AALY…IFFI), 417–439 (AIIS…LYVH), and 517–535 (FLVH…LILV). [4Fe-4S] cluster is bound by residues cysteine 559 and cysteine 568. A run of 2 helical transmembrane segments spans residues 575 to 596 (AFYL…YWHW) and 643 to 665 (LSVW…MFLI). Positions 654, 662, and 670 each coordinate chlorophyll a. Tryptophan 671 is a phylloquinone binding site. A helical transmembrane segment spans residues 707–727 (LVGLAHFSVGYIFTYAAFLIA).

The protein belongs to the PsaA/PsaB family. As to quaternary structure, the PsaA/B heterodimer binds the P700 chlorophyll special pair and subsequent electron acceptors. PSI consists of a core antenna complex that captures photons, and an electron transfer chain that converts photonic excitation into a charge separation. The eukaryotic PSI reaction center is composed of at least 11 subunits. P700 is a chlorophyll a/chlorophyll a' dimer, A0 is one or more chlorophyll a, A1 is one or both phylloquinones and FX is a shared 4Fe-4S iron-sulfur center. is required as a cofactor.

The protein resides in the plastid. Its subcellular location is the chloroplast thylakoid membrane. It catalyses the reaction reduced [plastocyanin] + hnu + oxidized [2Fe-2S]-[ferredoxin] = oxidized [plastocyanin] + reduced [2Fe-2S]-[ferredoxin]. Its function is as follows. PsaA and PsaB bind P700, the primary electron donor of photosystem I (PSI), as well as the electron acceptors A0, A1 and FX. PSI is a plastocyanin-ferredoxin oxidoreductase, converting photonic excitation into a charge separation, which transfers an electron from the donor P700 chlorophyll pair to the spectroscopically characterized acceptors A0, A1, FX, FA and FB in turn. Oxidized P700 is reduced on the lumenal side of the thylakoid membrane by plastocyanin. The chain is Photosystem I P700 chlorophyll a apoprotein A2 from Nymphaea alba (White water-lily).